A 444-amino-acid chain; its full sequence is Glutamyl-tRNA reductase (444 aa).

Substrate contacts are provided by residues 49 to 52 (TCNR), serine 109, 114 to 116 (ETQ), and glutamine 120. Cysteine 50 serves as the catalytic Nucleophile. Position 189 to 194 (189 to 194 (GAGKMG)) interacts with NADP(+).

This sequence belongs to the glutamyl-tRNA reductase family. As to quaternary structure, homodimer.

The catalysed reaction is (S)-4-amino-5-oxopentanoate + tRNA(Glu) + NADP(+) = L-glutamyl-tRNA(Glu) + NADPH + H(+). The protein operates within porphyrin-containing compound metabolism; protoporphyrin-IX biosynthesis; 5-aminolevulinate from L-glutamyl-tRNA(Glu): step 1/2. Functionally, catalyzes the NADPH-dependent reduction of glutamyl-tRNA(Glu) to glutamate 1-semialdehyde (GSA). The polypeptide is Glutamyl-tRNA reductase (Bacillus cereus (strain G9842)).